The primary structure comprises 156 residues: Ribosome maturation factor RimP (156 aa).

The protein belongs to the RimP family.

Its subcellular location is the cytoplasm. Functionally, required for maturation of 30S ribosomal subunits. The protein is Ribosome maturation factor RimP of Dictyoglomus thermophilum (strain ATCC 35947 / DSM 3960 / H-6-12).